The primary structure comprises 505 residues: Glutamate--tRNA ligase (505 aa).

The short motif at 12 to 22 (PSPTGALHIGG) is the 'HIGH' region element. A 'KMSKS' region motif is present at residues 260–264 (KLSKR). Lys-263 lines the ATP pocket.

Belongs to the class-I aminoacyl-tRNA synthetase family. Glutamate--tRNA ligase type 1 subfamily. Monomer.

The protein resides in the cytoplasm. It carries out the reaction tRNA(Glu) + L-glutamate + ATP = L-glutamyl-tRNA(Glu) + AMP + diphosphate. Its function is as follows. Catalyzes the attachment of glutamate to tRNA(Glu) in a two-step reaction: glutamate is first activated by ATP to form Glu-AMP and then transferred to the acceptor end of tRNA(Glu). The chain is Glutamate--tRNA ligase from Bacteroides fragilis (strain ATCC 25285 / DSM 2151 / CCUG 4856 / JCM 11019 / LMG 10263 / NCTC 9343 / Onslow / VPI 2553 / EN-2).